We begin with the raw amino-acid sequence, 377 residues long: Anhydro-N-acetylmuramic acid kinase (377 aa).

Residue 18–25 (GTSADGID) coordinates ATP.

The protein belongs to the anhydro-N-acetylmuramic acid kinase family.

The catalysed reaction is 1,6-anhydro-N-acetyl-beta-muramate + ATP + H2O = N-acetyl-D-muramate 6-phosphate + ADP + H(+). The protein operates within amino-sugar metabolism; 1,6-anhydro-N-acetylmuramate degradation. Its pathway is cell wall biogenesis; peptidoglycan recycling. Catalyzes the specific phosphorylation of 1,6-anhydro-N-acetylmuramic acid (anhMurNAc) with the simultaneous cleavage of the 1,6-anhydro ring, generating MurNAc-6-P. Is required for the utilization of anhMurNAc either imported from the medium or derived from its own cell wall murein, and thus plays a role in cell wall recycling. This chain is Anhydro-N-acetylmuramic acid kinase, found in Xanthomonas oryzae pv. oryzae (strain MAFF 311018).